The following is a 372-amino-acid chain: MLANSSSTNSSVLPCPDYRPTHRLHLVVYSLVLAAGLPLNALALWVFLRALRVHSVVSVYMCNLAASDLLFTLSLPVRLSYYALHHWPFPDLLCQTTGAIFQMNMYGSCIFLMLINVDRYAAIVHPLRLRHLRRPRVARLLCLGVWALILVFAVPAARVHRPSRCRYRDLEVRLCFESFSDELWKGRLLPLVLLAEALGFLLPLAAVVYSSGRVFWTLARPDATQSQRRRKTVRLLLANLVIFLLCFVPYNSTLAVYGLLRSKLVAASVPARDRVRGVLMVMVLLAGANCVLDPLVYYFSAEGFRNTLRGLGTPHRARTSATNGTRAALAQSERSAVTTDATRPDAASQGLLRPSDSHSLSSFTQCPQDSAL.

The Extracellular segment spans residues 1-26 (MLANSSSTNSSVLPCPDYRPTHRLHL). N-linked (GlcNAc...) asparagine glycans are attached at residues asparagine 4 and asparagine 9. Residues 27-47 (VVYSLVLAAGLPLNALALWVF) traverse the membrane as a helical segment. Residues 48–55 (LRALRVHS) lie on the Cytoplasmic side of the membrane. A helical membrane pass occupies residues 56-76 (VVSVYMCNLAASDLLFTLSLP). Residues 77 to 96 (VRLSYYALHHWPFPDLLCQT) are Extracellular-facing. A disulfide bridge connects residues cysteine 94 and cysteine 175. Residues 97-117 (TGAIFQMNMYGSCIFLMLINV) form a helical membrane-spanning segment. Topologically, residues 118–136 (DRYAAIVHPLRLRHLRRPR) are cytoplasmic. The chain crosses the membrane as a helical span at residues 137–157 (VARLLCLGVWALILVFAVPAA). Residues 158-187 (RVHRPSRCRYRDLEVRLCFESFSDELWKGR) are Extracellular-facing. Residues 188–208 (LLPLVLLAEALGFLLPLAAVV) traverse the membrane as a helical segment. Topologically, residues 209 to 239 (YSSGRVFWTLARPDATQSQRRRKTVRLLLAN) are cytoplasmic. The helical transmembrane segment at 240–260 (LVIFLLCFVPYNSTLAVYGLL) threads the bilayer. Residues 261 to 276 (RSKLVAASVPARDRVR) lie on the Extracellular side of the membrane. A helical transmembrane segment spans residues 277 to 297 (GVLMVMVLLAGANCVLDPLVY). Residues 298–372 (YFSAEGFRNT…FTQCPQDSAL (75 aa)) are Cytoplasmic-facing. A disordered region spans residues 312–372 (GTPHRARTSA…FTQCPQDSAL (61 aa)). Composition is skewed to polar residues over residues 332–341 (SERSAVTTDA) and 357–372 (SHSL…DSAL).

This sequence belongs to the G-protein coupled receptor 1 family. As to expression, not expressed in frontal cortex, basal forebrain, caudate putamen, thalamus, or hippocampus.

The protein resides in the cell membrane. Functionally, receptor for lysophosphatidic acid (LPA), a mediator of diverse cellular activities. In Homo sapiens (Human), this protein is Lysophosphatidic acid receptor 5 (LPAR5).